A 463-amino-acid polypeptide reads, in one-letter code: Major capsid protein (463 aa).

The protein belongs to the NCLDV major capsid protein family. In terms of assembly, homotrimer.

It is found in the virion. Its function is as follows. Major capsid protein that self assembles to form an icosahedral capsid. Represents around 50% of the total virion protein mass. The chain is Major capsid protein (MCP) from Rana tigrina ranavirus.